A 360-amino-acid polypeptide reads, in one-letter code: Peptide chain release factor 1 (360 aa).

An N5-methylglutamine modification is found at Gln-235. The interval 285 to 311 (KRQQAQASERRNLLGSGDRSDRHRTYN) is disordered. The segment covering 292–308 (SERRNLLGSGDRSDRHR) has biased composition (basic and acidic residues).

It belongs to the prokaryotic/mitochondrial release factor family. Post-translationally, methylated by PrmC. Methylation increases the termination efficiency of RF1.

It localises to the cytoplasm. Functionally, peptide chain release factor 1 directs the termination of translation in response to the peptide chain termination codons UAG and UAA. The chain is Peptide chain release factor 1 from Hamiltonella defensa subsp. Acyrthosiphon pisum (strain 5AT).